Reading from the N-terminus, the 384-residue chain is MAP kinase-activated protein kinase 3 (384 aa).

At Met1 the chain carries N-acetylmethionine. A disordered region spans residues 1–33; sequence MDGETAGEKGSLVPQPGALGAPALGGAPAPGVR. A compositionally biased stretch (low complexity) spans 14 to 31; that stretch reads PQPGALGAPALGGAPAPG. One can recognise a Protein kinase domain in the interval 46–306; the sequence is QLSKQVLGLG…IMQFMNHPWI (261 aa). Residues 52–60 and Lys75 each bind ATP; that span reads LGLGVNGKV. Catalysis depends on Asp168, which acts as the Proton acceptor. Thr203 carries the post-translational modification Phosphothreonine; by MAPK14. Phosphoserine; by MAPK14 is present on Ser253. Ser309 is modified (phosphoserine; by autocatalysis). The tract at residues 309 to 345 is autoinhibitory helix; sequence SMEVPQTPLHTARVLEEDKDHWDDVKEEMTSALATMR. Thr315 is subject to Phosphothreonine; by MAPK14. The short motif at 337-346 is the Nuclear export signal (NES) element; the sequence is MTSALATMRV. The tract at residues 347 to 371 is p38 MAPK-binding site; it reads DYDQVKIKDLKTSNNRLLNKRRKKQ. 2 consecutive short sequence motifs (bipartite nuclear localization signal) follow at residues 352-355 and 366-370; these read KIKD and KRRKK. The tract at residues 359 to 384 is disordered; sequence SNNRLLNKRRKKQGGSSSASPGCNNQ. Residues 372–384 show a composition bias toward polar residues; that stretch reads GGSSSASPGCNNQ.

Belongs to the protein kinase superfamily. CAMK Ser/Thr protein kinase family. As to quaternary structure, heterodimer with p38-alpha/MAPK14. The heterodimer with p38-alpha/MAPK14 forms a stable complex: molecules are positioned 'face to face' so that the ATP-binding sites of both kinases are at the heterodimer interface. Interacts with TCF3 and with polycomb proteins, such as PCH2 and BMI1/PCGF4. Phosphorylated and activated by MAPK1/ERK2 and MAPK3/ERK1. Phosphorylated and activated by MAP kinase p38-alpha/MAPK14 at Thr-203, Ser-253 and Thr-315.

Its subcellular location is the nucleus. It is found in the cytoplasm. The catalysed reaction is L-seryl-[protein] + ATP = O-phospho-L-seryl-[protein] + ADP + H(+). It catalyses the reaction L-threonyl-[protein] + ATP = O-phospho-L-threonyl-[protein] + ADP + H(+). With respect to regulation, activated following phosphorylation by p38-alpha/MAPK14 following various stresses. Inhibited by ligand 5B (2'-[2-(1,3-benzodioxol-5-yl)pyrimidin-4-yl]-5',6'-dihydrospiro[piperidine-4,7'-pyrrolo[3,2-c]pyridin]- 4'(1'h)-one) and ligand P4O (2-[2-(2-fluorophenyl)pyridin-4-yl]-1,5,6,7-tetrahydro- 4h-pyrrolo[3,2-c]pyridin-4-one), 2 ATP-competitive inhibitors. Its function is as follows. Stress-activated serine/threonine-protein kinase involved in cytokines production, endocytosis, cell migration, chromatin remodeling and transcriptional regulation. Following stress, it is phosphorylated and activated by MAP kinase p38-alpha/MAPK14, leading to phosphorylation of substrates. Phosphorylates serine in the peptide sequence, Hyd-X-R-X(2)-S, where Hyd is a large hydrophobic residue. MAPKAPK2 and MAPKAPK3, share the same function and substrate specificity, but MAPKAPK3 kinase activity and level in protein expression are lower compared to MAPKAPK2. Phosphorylates HSP27/HSPB1, KRT18, KRT20, RCSD1, RPS6KA3, TAB3 and TTP/ZFP36. Mediates phosphorylation of HSP27/HSPB1 in response to stress, leading to dissociate HSP27/HSPB1 from large small heat-shock protein (sHsps) oligomers and impair their chaperone activities and ability to protect against oxidative stress effectively. Involved in inflammatory response by regulating tumor necrosis factor (TNF) and IL6 production post-transcriptionally: acts by phosphorylating AU-rich elements (AREs)-binding proteins, such as TTP/ZFP36, leading to regulate the stability and translation of TNF and IL6 mRNAs. Phosphorylation of TTP/ZFP36, a major post-transcriptional regulator of TNF, promotes its binding to 14-3-3 proteins and reduces its ARE mRNA affinity leading to inhibition of dependent degradation of ARE-containing transcript. Involved in toll-like receptor signaling pathway (TLR) in dendritic cells: required for acute TLR-induced macropinocytosis by phosphorylating and activating RPS6KA3. Also acts as a modulator of Polycomb-mediated repression. The chain is MAP kinase-activated protein kinase 3 (Mapkapk3) from Rattus norvegicus (Rat).